Here is a 213-residue protein sequence, read N- to C-terminus: Adenylate kinase (213 aa).

G10 to T15 contacts ATP. Residues S30–V59 form an NMP region. AMP contacts are provided by residues T31, R36, A57 to V59, G85 to R88, and Q92. The segment at G126–D163 is LID. R127 provides a ligand contact to ATP. Residues C130, C133, C150, and C153 each contribute to the Zn(2+) site. AMP-binding residues include R160 and R171. Residue G199 participates in ATP binding.

It belongs to the adenylate kinase family. As to quaternary structure, monomer.

The protein localises to the cytoplasm. It catalyses the reaction AMP + ATP = 2 ADP. Its pathway is purine metabolism; AMP biosynthesis via salvage pathway; AMP from ADP: step 1/1. In terms of biological role, catalyzes the reversible transfer of the terminal phosphate group between ATP and AMP. Plays an important role in cellular energy homeostasis and in adenine nucleotide metabolism. This Syntrophobacter fumaroxidans (strain DSM 10017 / MPOB) protein is Adenylate kinase.